Consider the following 114-residue polypeptide: Probable acid stress chaperone HdeA (114 aa).

A signal peptide spans 1–26; it reads MIKTLFNKNTALAAVAILALSGSAMA. Cysteines 46 and 94 form a disulfide.

Belongs to the HdeA family.

It localises to the periplasm. Required for optimal acid stress protection. Exhibits a chaperone-like activity only at low pH by suppressing non-specifically the aggregation of denaturated periplasmic proteins. This chain is Probable acid stress chaperone HdeA, found in Brucella ovis (strain ATCC 25840 / 63/290 / NCTC 10512).